A 435-amino-acid polypeptide reads, in one-letter code: GTPase Obg (435 aa).

The Obg domain occupies 6–164; sequence ADFVDRVKIF…RWLELELKIL (159 aa). Residues 165–335 enclose the OBG-type G domain; sequence ADVGLVGYPN…LVSKLASIVR (171 aa). GTP contacts are provided by residues 171–178, 196–200, 217–220, 287–290, and 316–318; these read GYPNVGKS, FTTLI, DIPG, NKID, and SAV. S178 and T198 together coordinate Mg(2+). Residues 357–435 form the OCT domain; sequence RRLPEKFHLE…IGDFEFEYRE (79 aa).

This sequence belongs to the TRAFAC class OBG-HflX-like GTPase superfamily. OBG GTPase family. In terms of assembly, monomer. Mg(2+) is required as a cofactor.

It localises to the cytoplasm. An essential GTPase which binds GTP, GDP and possibly (p)ppGpp with moderate affinity, with high nucleotide exchange rates and a fairly low GTP hydrolysis rate. Plays a role in control of the cell cycle, stress response, ribosome biogenesis and in those bacteria that undergo differentiation, in morphogenesis control. This chain is GTPase Obg, found in Thermotoga maritima (strain ATCC 43589 / DSM 3109 / JCM 10099 / NBRC 100826 / MSB8).